The sequence spans 172 residues: S-ribosylhomocysteine lyase (172 aa).

Fe cation-binding residues include histidine 54, histidine 58, and cysteine 128.

It belongs to the LuxS family. Homodimer. Fe cation is required as a cofactor.

It carries out the reaction S-(5-deoxy-D-ribos-5-yl)-L-homocysteine = (S)-4,5-dihydroxypentane-2,3-dione + L-homocysteine. In terms of biological role, involved in the synthesis of autoinducer 2 (AI-2) which is secreted by bacteria and is used to communicate both the cell density and the metabolic potential of the environment. The regulation of gene expression in response to changes in cell density is called quorum sensing. Catalyzes the transformation of S-ribosylhomocysteine (RHC) to homocysteine (HC) and 4,5-dihydroxy-2,3-pentadione (DPD). This Vibrio cholerae serotype O1 (strain ATCC 39541 / Classical Ogawa 395 / O395) protein is S-ribosylhomocysteine lyase.